We begin with the raw amino-acid sequence, 128 residues long: MTESLDLELDGINTEQRLLERRKAASERERLKQEVEDMVNLHQCKRGIFCVVKQAKLTYEKTTTGNRLSYKLPTQRQKLVLMVGEKPITVTQHSAETEGCLHFPYQGPEDLCTLIKTMCGIRDLIPFN.

The protein belongs to the adenoviridae E3_15 family. As to quaternary structure, may bind to host IKBKG, OPTN and RRAGA.

Its subcellular location is the host cytoplasm. The protein resides in the host nucleus. Its function is as follows. May prevent Nf-kappaB activation by immune signals like Tumor necrosis factor, presumably by inhibiting NFKB1 dimer DNA-binding. May act directly at the TNF receptor to inhibit signaling. The protein is Early 3 14.7 kDa protein of Human adenovirus C serotype 2 (HAdV-2).